Here is a 158-residue protein sequence, read N- to C-terminus: Cyclic pyranopterin monophosphate synthase (158 aa).

Substrate-binding positions include 76 to 78 (LCH) and 114 to 115 (ME). The active site involves Asp-129.

It belongs to the MoaC family. As to quaternary structure, homohexamer; trimer of dimers.

The catalysed reaction is (8S)-3',8-cyclo-7,8-dihydroguanosine 5'-triphosphate = cyclic pyranopterin phosphate + diphosphate. The protein operates within cofactor biosynthesis; molybdopterin biosynthesis. Functionally, catalyzes the conversion of (8S)-3',8-cyclo-7,8-dihydroguanosine 5'-triphosphate to cyclic pyranopterin monophosphate (cPMP). This Shewanella woodyi (strain ATCC 51908 / MS32) protein is Cyclic pyranopterin monophosphate synthase.